Reading from the N-terminus, the 224-residue chain is Holliday junction branch migration complex subunit RuvA (224 aa).

Residues 1–64 are domain I; it reads MIGKVAGILD…EDLLQLFGFP (64 aa). A domain II region spans residues 65–143; it reads TMIEKEWHRL…ALMAMGGGTA (79 aa). Residues 141–185 form a disordered region; the sequence is GTAALAPSEPPEPQPGTSSGSRRKTRAPEPPRPSHTADALSALAN. Residues 144 to 170 form a flexible linker region; it reads ALAPSEPPEPQPGTSSGSRRKTRAPEP. The interval 171–224 is domain III; it reads PRPSHTADALSALANLGYQPTDAAQAVAQAAGESPDADTAALIRAALKLLAPKS.

The protein belongs to the RuvA family. As to quaternary structure, homotetramer. Forms an RuvA(8)-RuvB(12)-Holliday junction (HJ) complex. HJ DNA is sandwiched between 2 RuvA tetramers; dsDNA enters through RuvA and exits via RuvB. An RuvB hexamer assembles on each DNA strand where it exits the tetramer. Each RuvB hexamer is contacted by two RuvA subunits (via domain III) on 2 adjacent RuvB subunits; this complex drives branch migration. In the full resolvosome a probable DNA-RuvA(4)-RuvB(12)-RuvC(2) complex forms which resolves the HJ.

It localises to the cytoplasm. Its function is as follows. The RuvA-RuvB-RuvC complex processes Holliday junction (HJ) DNA during genetic recombination and DNA repair, while the RuvA-RuvB complex plays an important role in the rescue of blocked DNA replication forks via replication fork reversal (RFR). RuvA specifically binds to HJ cruciform DNA, conferring on it an open structure. The RuvB hexamer acts as an ATP-dependent pump, pulling dsDNA into and through the RuvAB complex. HJ branch migration allows RuvC to scan DNA until it finds its consensus sequence, where it cleaves and resolves the cruciform DNA. This is Holliday junction branch migration complex subunit RuvA from Cereibacter sphaeroides (strain KD131 / KCTC 12085) (Rhodobacter sphaeroides).